The primary structure comprises 359 residues: 3-dehydroquinate synthase (359 aa).

Residues 106 to 110 (GVVGD), 130 to 131 (TS), Lys-143, and Lys-152 each bind NAD(+). Residues Glu-185, His-246, and His-262 each contribute to the Zn(2+) site.

This sequence belongs to the sugar phosphate cyclases superfamily. Dehydroquinate synthase family. The cofactor is NAD(+). Requires Co(2+) as cofactor. Zn(2+) serves as cofactor.

The protein localises to the cytoplasm. It catalyses the reaction 7-phospho-2-dehydro-3-deoxy-D-arabino-heptonate = 3-dehydroquinate + phosphate. It functions in the pathway metabolic intermediate biosynthesis; chorismate biosynthesis; chorismate from D-erythrose 4-phosphate and phosphoenolpyruvate: step 2/7. Catalyzes the conversion of 3-deoxy-D-arabino-heptulosonate 7-phosphate (DAHP) to dehydroquinate (DHQ). This Lactiplantibacillus plantarum (strain ATCC BAA-793 / NCIMB 8826 / WCFS1) (Lactobacillus plantarum) protein is 3-dehydroquinate synthase.